The primary structure comprises 208 residues: FMN-dependent NADH:quinone oxidoreductase 4 (208 aa).

This sequence belongs to the azoreductase type 1 family. Homodimer. Requires FMN as cofactor.

The enzyme catalyses 2 a quinone + NADH + H(+) = 2 a 1,4-benzosemiquinone + NAD(+). The catalysed reaction is N,N-dimethyl-1,4-phenylenediamine + anthranilate + 2 NAD(+) = 2-(4-dimethylaminophenyl)diazenylbenzoate + 2 NADH + 2 H(+). Its function is as follows. Quinone reductase that provides resistance to thiol-specific stress caused by electrophilic quinones. In terms of biological role, also exhibits azoreductase activity. Catalyzes the reductive cleavage of the azo bond in aromatic azo compounds to the corresponding amines. This is FMN-dependent NADH:quinone oxidoreductase 4 from Bacillus anthracis.